The following is a 478-amino-acid chain: Maintenance of telomere capping protein 1 (478 aa).

Residues Met1–Asn153 are disordered. 2 stretches are compositionally biased toward basic and acidic residues: residues Thr77–Pro87 and Ala95–Glu124. Positions Lys125–Glu141 are enriched in acidic residues. Ser273 bears the Phosphoserine mark. Composition is skewed to basic and acidic residues over residues Gln321–Ser336 and Ser421–Glu435. Disordered stretches follow at residues Gln321 to Asn341 and Thr416 to Pro448. Residue Ser436 is modified to Phosphoserine. Acidic residues predominate over residues Ser436–Asp447.

It belongs to the MTC1 family. Interacts with ribosomes.

It localises to the cytoplasm. The protein resides in the cytoplasmic vesicle. It is found in the COPI-coated vesicle. Functionally, involved in telomere capping. The chain is Maintenance of telomere capping protein 1 (MTC1) from Saccharomyces cerevisiae (strain ATCC 204508 / S288c) (Baker's yeast).